Consider the following 433-residue polypeptide: Signal recognition particle 54 kDa protein (433 aa).

GTP contacts are provided by residues 100–107, 180–184, and 238–241; these read GLQGSGKT, DTAGR, and TKFD.

The protein belongs to the GTP-binding SRP family. SRP54 subfamily. In terms of assembly, part of the signal recognition particle protein translocation system, which is composed of SRP and FtsY. Archaeal SRP consists of a 7S RNA molecule of 300 nucleotides and two protein subunits: SRP54 and SRP19.

The protein localises to the cytoplasm. It carries out the reaction GTP + H2O = GDP + phosphate + H(+). Functionally, involved in targeting and insertion of nascent membrane proteins into the cytoplasmic membrane. Binds to the hydrophobic signal sequence of the ribosome-nascent chain (RNC) as it emerges from the ribosomes. The SRP-RNC complex is then targeted to the cytoplasmic membrane where it interacts with the SRP receptor FtsY. This Archaeoglobus fulgidus (strain ATCC 49558 / DSM 4304 / JCM 9628 / NBRC 100126 / VC-16) protein is Signal recognition particle 54 kDa protein.